A 305-amino-acid chain; its full sequence is Homoserine O-acetyltransferase (305 aa).

Cys-142 acts as the Acyl-thioester intermediate in catalysis. Positions 163 and 192 each coordinate substrate. His-233 acts as the Proton acceptor in catalysis. Glu-235 is an active-site residue. Arg-247 serves as a coordination point for substrate.

It belongs to the MetA family.

Its subcellular location is the cytoplasm. It catalyses the reaction L-homoserine + acetyl-CoA = O-acetyl-L-homoserine + CoA. It participates in amino-acid biosynthesis; L-methionine biosynthesis via de novo pathway; O-acetyl-L-homoserine from L-homoserine: step 1/1. Transfers an acetyl group from acetyl-CoA to L-homoserine, forming acetyl-L-homoserine. This is Homoserine O-acetyltransferase from Methanomassiliicoccus intestinalis (strain Issoire-Mx1).